Consider the following 532-residue polypeptide: Methionine--tRNA ligase (532 aa).

The 'HIGH' region motif lies at 16 to 26 (YYVNDVPHLGS). Residues cysteine 131, cysteine 134, cysteine 149, and histidine 152 each coordinate Zn(2+). A 'KMSKS' region motif is present at residues 305–309 (KMGKS). Residue lysine 308 participates in ATP binding.

This sequence belongs to the class-I aminoacyl-tRNA synthetase family. MetG type 2A subfamily. As to quaternary structure, monomer. It depends on Zn(2+) as a cofactor.

It is found in the cytoplasm. It catalyses the reaction tRNA(Met) + L-methionine + ATP = L-methionyl-tRNA(Met) + AMP + diphosphate. Is required not only for elongation of protein synthesis but also for the initiation of all mRNA translation through initiator tRNA(fMet) aminoacylation. The chain is Methionine--tRNA ligase (metG) from Synechocystis sp. (strain ATCC 27184 / PCC 6803 / Kazusa).